The primary structure comprises 286 residues: Protein PXR1 (286 aa).

A disordered region spans residues 1 to 20 (MGLAGTKVKQRFGLDPRNTS). Residues 25–71 (KSRFGHRYLESMGWAPGKGLGLVEHATTTHVKVSVKDDTVGLGAKLA) enclose the G-patch domain. Positions 148–255 (EDESEVNFKS…PRKHDQISNV (108 aa)) are disordered. Residues 168–198 (PSRDSTSHAKRMRGDESKKSTRDQSKQERKE) show a composition bias toward basic and acidic residues. The segment covering 199 to 230 (KKIKTEKKEKKEKKEKKEKKEKKEKKEKKEKK) has biased composition (basic residues).

Belongs to the PINX1 family.

It is found in the nucleus. Its subcellular location is the nucleolus. In terms of biological role, involved in rRNA-processing at A0, A1 and A2 sites and negatively regulates telomerase. This Meyerozyma guilliermondii (strain ATCC 6260 / CBS 566 / DSM 6381 / JCM 1539 / NBRC 10279 / NRRL Y-324) (Yeast) protein is Protein PXR1 (PXR1).